We begin with the raw amino-acid sequence, 147 residues long: Hemoglobin subunit delta (147 aa).

The 145-residue stretch at 3 to 147 (HLTADEKAAV…VAAALAHKYH (145 aa)) folds into the Globin domain. Heme b is bound by residues His-64 and His-93.

It belongs to the globin family. In terms of assembly, heterotetramer of two delta chains and two alpha chains. Red blood cells.

This Carlito syrichta (Philippine tarsier) protein is Hemoglobin subunit delta (HBD).